Here is a 209-residue protein sequence, read N- to C-terminus: Large ribosomal subunit protein uL3 (209 aa).

Residues 128–152 (QARGPMSHGSRYHRRPGSMGPVDPN) are disordered.

Belongs to the universal ribosomal protein uL3 family. As to quaternary structure, part of the 50S ribosomal subunit. Forms a cluster with proteins L14 and L19.

One of the primary rRNA binding proteins, it binds directly near the 3'-end of the 23S rRNA, where it nucleates assembly of the 50S subunit. The chain is Large ribosomal subunit protein uL3 from Halalkalibacterium halodurans (strain ATCC BAA-125 / DSM 18197 / FERM 7344 / JCM 9153 / C-125) (Bacillus halodurans).